The chain runs to 78 residues: Acyl carrier protein (78 aa).

The Carrier domain occupies 2–77 (SDIAERVKKI…DAIKFLEKNA (76 aa)). Ser37 carries the post-translational modification O-(pantetheine 4'-phosphoryl)serine.

The protein belongs to the acyl carrier protein (ACP) family. In terms of processing, 4'-phosphopantetheine is transferred from CoA to a specific serine of apo-ACP by AcpS. This modification is essential for activity because fatty acids are bound in thioester linkage to the sulfhydryl of the prosthetic group.

The protein localises to the cytoplasm. It participates in lipid metabolism; fatty acid biosynthesis. Carrier of the growing fatty acid chain in fatty acid biosynthesis. This chain is Acyl carrier protein, found in Xanthobacter autotrophicus (strain ATCC BAA-1158 / Py2).